Reading from the N-terminus, the 1157-residue chain is Nitric oxide synthase, inducible (1157 aa).

A DINNN-motif; mediates interaction with SPSB1, SPSB2 and SPSB4 motif is present at residues 23 to 27 (DINNN). The interval 29–64 (EKLRQASSSPVTQDDPKCPSRSRHRNECSQPLAETA) is disordered. Zn(2+) is bound by residues cysteine 110 and cysteine 115. Residue cysteine 200 coordinates heme b. L-arginine-binding residues include glutamine 263, tryptophan 372, tyrosine 373, and glutamate 377. (6R)-L-erythro-5,6,7,8-tetrahydrobiopterin-binding residues include arginine 381, isoleucine 462, tryptophan 463, and phenylalanine 476. A heme b-binding site is contributed by tyrosine 491. The segment at 515–535 (FKVLVKAVLFAAVLMHKTMAA) is calmodulin-binding. A Flavodoxin-like domain is found at 539-677 (ATILFATETG…AFRGWAVQTF (139 aa)). The FMN site is built by threonine 545, glutamate 546, threonine 547, arginine 549, serine 550, serine 591, threonine 592, serine 628, cysteine 635, glutamate 661, and glutamine 665. The FAD-binding FR-type domain maps to 730–970 (KYVFSMRLKS…VRSASGFQLP (241 aa)). Position 750 (arginine 750) interacts with NADP(+). Residues histidine 772, arginine 906, tyrosine 908, serine 909, threonine 924, and alanine 926 each contribute to the FAD site. Threonine 929 contacts NADP(+). Residues tyrosine 930, valine 943, cysteine 944, and serine 945 each contribute to the FAD site. The NADP(+) site is built by threonine 984, arginine 1017, serine 1046, arginine 1047, lysine 1053, tyrosine 1055, glutamine 1057, and aspartate 1090. Residues 1138-1157 (KEGAVGPPSDPRAPGAHGKS) form a disordered region.

The protein belongs to the NOS family. In terms of assembly, homodimer. Interacts with NHERF1. Interacts with GAPDH; induced by oxidatively-modified low-densitity lipoprotein (LDL(ox)). Interacts with S100A8 and S100A9 to form the iNOS-S100A8/9 transnitrosylase complex. Interacts with SPSB1, SPSB2 and SPSB4. Interacts with ELOC and CUL5 in the presence of SPSB1 or SPSB2 or SPSB4. Forms a complex with ASL, ASS1 and HSP90AA1; the complex regulates cell-autonomous L-arginine synthesis and citrulline recycling while channeling extracellular L-arginine to nitric oxide synthesis pathway. Requires heme b as cofactor. FAD is required as a cofactor. The cofactor is FMN. (6R)-L-erythro-5,6,7,8-tetrahydrobiopterin serves as cofactor. Post-translationally, polyubiquitinated; mediated by SPSB1, SPSB2 and SPSB4, leading to proteasomal degradation. As to expression, detected in both stimulated and unstimulated immune cells and macrophages with little or no up-regulation following cellular stimulation with lipopolysaccharides (LPS) or concanavalin A (ConA).

It localises to the cytoplasm. The protein localises to the cytosol. The enzyme catalyses 2 L-arginine + 3 NADPH + 4 O2 + H(+) = 2 L-citrulline + 2 nitric oxide + 3 NADP(+) + 4 H2O. Its activity is regulated as follows. Not stimulated by calcium/calmodulin. Its function is as follows. Produces nitric oxide (NO) which is a messenger molecule with diverse functions throughout the body. In macrophages, NO mediates tumoricidal and bactericidal actions. Also has nitrosylase activity and mediates cysteine S-nitrosylation of cytoplasmic target proteins such PTGS2/COX2. As component of the iNOS-S100A8/9 transnitrosylase complex involved in the selective inflammatory stimulus-dependent S-nitrosylation of GAPDH implicated in regulation of the GAIT complex activity and probably multiple targets including ANXA5, EZR, MSN and VIM. Involved in inflammation, enhances the synthesis of pro-inflammatory mediators such as IL6 and IL8. This Sus scrofa (Pig) protein is Nitric oxide synthase, inducible (NOS2).